The primary structure comprises 166 residues: Nucleotide-binding protein Dred_1927 (166 aa).

Belongs to the YajQ family.

Nucleotide-binding protein. In Desulforamulus reducens (strain ATCC BAA-1160 / DSM 100696 / MI-1) (Desulfotomaculum reducens), this protein is Nucleotide-binding protein Dred_1927.